We begin with the raw amino-acid sequence, 252 residues long: 5-oxoprolinase subunit A (252 aa).

It belongs to the LamB/PxpA family. Forms a complex composed of PxpA, PxpB and PxpC.

It catalyses the reaction 5-oxo-L-proline + ATP + 2 H2O = L-glutamate + ADP + phosphate + H(+). In terms of biological role, catalyzes the cleavage of 5-oxoproline to form L-glutamate coupled to the hydrolysis of ATP to ADP and inorganic phosphate. This chain is 5-oxoprolinase subunit A, found in Mycobacterium ulcerans (strain Agy99).